The chain runs to 511 residues: Cobyric acid synthase (511 aa).

The region spanning 251-443 (LLDIAIICLP…IHGIFDNDVF (193 aa)) is the GATase cobBQ-type domain. The active-site Nucleophile is the cysteine 332. Histidine 435 is an active-site residue.

It belongs to the CobB/CobQ family. CobQ subfamily.

Its pathway is cofactor biosynthesis; adenosylcobalamin biosynthesis. In terms of biological role, catalyzes amidations at positions B, D, E, and G on adenosylcobyrinic A,C-diamide. NH(2) groups are provided by glutamine, and one molecule of ATP is hydrogenolyzed for each amidation. This chain is Cobyric acid synthase, found in Listeria monocytogenes serotype 4a (strain HCC23).